Here is a 139-residue protein sequence, read N- to C-terminus: Nucleoside diphosphate kinase (139 aa).

Residues Lys-11, Phe-59, Arg-87, Thr-93, Arg-104, and Asn-114 each coordinate ATP. The Pros-phosphohistidine intermediate role is filled by His-117.

The protein belongs to the NDK family. In terms of assembly, homotetramer. Requires Mg(2+) as cofactor.

The protein localises to the cytoplasm. The enzyme catalyses a 2'-deoxyribonucleoside 5'-diphosphate + ATP = a 2'-deoxyribonucleoside 5'-triphosphate + ADP. It catalyses the reaction a ribonucleoside 5'-diphosphate + ATP = a ribonucleoside 5'-triphosphate + ADP. Its function is as follows. Major role in the synthesis of nucleoside triphosphates other than ATP. The ATP gamma phosphate is transferred to the NDP beta phosphate via a ping-pong mechanism, using a phosphorylated active-site intermediate. This is Nucleoside diphosphate kinase from Flavobacterium johnsoniae (strain ATCC 17061 / DSM 2064 / JCM 8514 / BCRC 14874 / CCUG 350202 / NBRC 14942 / NCIMB 11054 / UW101) (Cytophaga johnsonae).